Reading from the N-terminus, the 1325-residue chain is ATP-binding cassette sub-family C member 4 (1325 aa).

The next 6 membrane-spanning stretches (helical) occupy residues 93–113 (LILG…PLFL), 136–156 (GYAA…HLYF), 205–225 (FDQV…AIAV), 227–247 (VLLW…LVIL), 322–342 (ASFF…YVLL), and 351–371 (VFVA…FFPS). In terms of domain architecture, ABC transmembrane type-1 1 spans 93 to 377 (LILGIFTLIE…FFPSAIERGS (285 aa)). Residues 410 to 633 (VHVQDFTAFW…GVDFGSLLKK (224 aa)) enclose the ABC transporter 1 domain. Residue 445–452 (GPVGAGKS) coordinates ATP. Threonine 646 and threonine 648 each carry phosphothreonine. A compositionally biased stretch (polar residues) spans 657–667 (ASIWSQQSSRP). Positions 657–690 (ASIWSQQSSRPSLKDGAPEGQDAENTQAVQPEES) are disordered. Residues serine 664 and serine 668 each carry the phosphoserine modification. 5 helical membrane-spanning segments follow: residues 710–730 (SWFF…FYVL), 761–781 (LSWY…FGIA), 849–869 (LVVS…IPLV), 954–974 (AICA…AKTL), and 977–997 (GQVG…QWSV). An ABC transmembrane type-1 2 domain is found at 714 to 1005 (IIFLVLLNMV…SVRQSAEVEN (292 aa)). The 234-residue stretch at 1041–1274 (IVFDNVNFTY…PESLFYKMVQ (234 aa)) folds into the ABC transporter 2 domain. 1075-1082 (GRTGAGKS) serves as a coordination point for ATP. The PDZ-binding motif lies at 1322-1325 (ETAL).

Interacts (via PDZ-binding motif) with SNX27 (via PDZ domain); this interaction accelerates MRP4 internalization. It depends on Mg(2+) as a cofactor. In terms of processing, N-glycosylated; leading to substrate-selective effects on its transport activity.

It localises to the basolateral cell membrane. The protein localises to the apical cell membrane. The catalysed reaction is ATP + H2O + xenobioticSide 1 = ADP + phosphate + xenobioticSide 2.. It carries out the reaction an S-substituted glutathione(in) + ATP + H2O = an S-substituted glutathione(out) + ADP + phosphate + H(+). The enzyme catalyses 17beta-estradiol 17-O-(beta-D-glucuronate)(in) + ATP + H2O = 17beta-estradiol 17-O-(beta-D-glucuronate)(out) + ADP + phosphate + H(+). It catalyses the reaction dehydroepiandrosterone 3-sulfate(in) + ATP + H2O = dehydroepiandrosterone 3-sulfate(out) + ADP + phosphate + H(+). The catalysed reaction is leukotriene C4(in) + ATP + H2O = leukotriene C4(out) + ADP + phosphate + H(+). It carries out the reaction leukotriene B4(in) + ATP + H2O = leukotriene B4(out) + ADP + phosphate + H(+). The enzyme catalyses urate(in) + ATP + H2O = urate(out) + ADP + phosphate + H(+). It catalyses the reaction 3',5'-cyclic GMP(in) + ATP + H2O = 3',5'-cyclic GMP(out) + ADP + phosphate + H(+). The catalysed reaction is 3',5'-cyclic AMP(in) + ATP + H2O = 3',5'-cyclic AMP(out) + ADP + phosphate + H(+). It carries out the reaction prostaglandin E2(in) + ATP + H2O = prostaglandin E2(out) + ADP + phosphate + H(+). The enzyme catalyses prostaglandin E1(in) + ATP + H2O = prostaglandin E1(out) + ADP + phosphate + H(+). It catalyses the reaction glycodeoxycholate(in) + glutathione(in) + ATP + H2O = glycodeoxycholate(out) + glutathione(out) + ADP + phosphate + H(+). The catalysed reaction is cholate(in) + glutathione(in) + ATP + H2O = cholate(out) + glutathione(out) + ADP + phosphate + H(+). It carries out the reaction glycocholate(in) + glutathione(in) + ATP + H2O = glycocholate(out) + glutathione(out) + ADP + phosphate + H(+). The enzyme catalyses taurocholate(in) + glutathione(in) + ATP + H2O = taurocholate(out) + glutathione(out) + ADP + phosphate + H(+). It catalyses the reaction glycochenodeoxycholate(in) + glutathione(in) + ATP + H2O = glycochenodeoxycholate(out) + glutathione(out) + ADP + phosphate + H(+). The catalysed reaction is taurochenodeoxycholate(in) + glutathione(in) + ATP + H2O = taurochenodeoxycholate(out) + glutathione(out) + ADP + phosphate + H(+). It carries out the reaction glycoursodeoxycholate(in) + glutathione(in) + ATP + H2O = glycoursodeoxycholate(out) + glutathione(out) + ADP + phosphate + H(+). The enzyme catalyses tauroursodeoxycholate(in) + glutathione(in) + ATP + H2O = tauroursodeoxycholate(out) + glutathione(out) + ADP + phosphate + H(+). ATP-dependent transporter of the ATP-binding cassette (ABC) family that actively extrudes physiological compounds and xenobiotics from cells. Transports a range of endogenous molecules that have a key role in cellular communication and signaling, including cyclic nucleotides such as cyclic AMP (cAMP) and cyclic GMP (cGMP), bile acids, steroid conjugates, urate, and prostaglandins. Also mediates the ATP-dependent efflux of glutathione conjugates such as leukotriene C4 (LTC4) and leukotriene B4 (LTB4). The presence of GSH is necessary for the ATP-dependent transport of LTB4, whereas GSH is not required for the transport of LTC4. Mediates the cotransport of bile acids with reduced glutathione (GSH). Transports a wide range of drugs and their metabolites, including anticancer, antiviral and antibiotics molecules. Confers resistance to anticancer agents. This is ATP-binding cassette sub-family C member 4 from Mus musculus (Mouse).